The sequence spans 148 residues: Deoxyuridine 5'-triphosphate nucleotidohydrolase (148 aa).

Residues Arg-67–Gly-69, Asn-80, Leu-84–Asp-86, and Met-94 each bind substrate.

Belongs to the dUTPase family. Mg(2+) serves as cofactor.

The catalysed reaction is dUTP + H2O = dUMP + diphosphate + H(+). It functions in the pathway pyrimidine metabolism; dUMP biosynthesis; dUMP from dCTP (dUTP route): step 2/2. Functionally, this enzyme is involved in nucleotide metabolism: it produces dUMP, the immediate precursor of thymidine nucleotides and it decreases the intracellular concentration of dUTP so that uracil cannot be incorporated into DNA. This chain is Deoxyuridine 5'-triphosphate nucleotidohydrolase, found in Burkholderia multivorans (strain ATCC 17616 / 249).